Here is a 236-residue protein sequence, read N- to C-terminus: Small ribosomal subunit protein uS2c (236 aa).

Belongs to the universal ribosomal protein uS2 family.

It localises to the plastid. The protein resides in the chloroplast. The polypeptide is Small ribosomal subunit protein uS2c (rps2) (Triticum aestivum (Wheat)).